The sequence spans 1145 residues: Nucleolar protein 6 (1145 aa).

A disordered region spans residues 1–46 (MQKKRNRAGPPQQEAASDDGEMSDSSDKMEVAQGKGKSAVKRAPDA).

It belongs to the NRAP family. Part of the small subunit (SSU) processome, composed of more than 70 proteins and the RNA chaperone small nucleolar RNA (snoRNA) U3.

Its subcellular location is the nucleus. The protein resides in the nucleolus. It is found in the chromosome. In terms of biological role, part of the small subunit (SSU) processome, first precursor of the small eukaryotic ribosomal subunit. During the assembly of the SSU processome in the nucleolus, many ribosome biogenesis factors, an RNA chaperone and ribosomal proteins associate with the nascent pre-rRNA and work in concert to generate RNA folding, modifications, rearrangements and cleavage as well as targeted degradation of pre-ribosomal RNA by the RNA exosome. In Xenopus tropicalis (Western clawed frog), this protein is Nucleolar protein 6 (nol6).